Reading from the N-terminus, the 283-residue chain is Elongation factor Ts (283 aa).

Residues 80-83 form an involved in Mg(2+) ion dislocation from EF-Tu region; it reads TDFV.

Belongs to the EF-Ts family.

It localises to the cytoplasm. Its function is as follows. Associates with the EF-Tu.GDP complex and induces the exchange of GDP to GTP. It remains bound to the aminoacyl-tRNA.EF-Tu.GTP complex up to the GTP hydrolysis stage on the ribosome. The protein is Elongation factor Ts of Klebsiella pneumoniae (strain 342).